Here is a 67-residue protein sequence, read N- to C-terminus: Small, acid-soluble spore protein B (67 aa).

This sequence belongs to the alpha/beta-type SASP family.

Functionally, SASP are bound to spore DNA. They are double-stranded DNA-binding proteins that cause DNA to change to an a-like conformation. They protect the DNA backbone from chemical and enzymatic cleavage and are thus involved in dormant spore's high resistance to UV light. The sequence is that of Small, acid-soluble spore protein B (sspB) from Bacillus subtilis (strain 168).